We begin with the raw amino-acid sequence, 278 residues long: Tryptophan synthase alpha chain (278 aa).

Residues glutamate 50 and aspartate 61 each act as proton acceptor in the active site.

It belongs to the TrpA family. Tetramer of two alpha and two beta chains.

The enzyme catalyses (1S,2R)-1-C-(indol-3-yl)glycerol 3-phosphate + L-serine = D-glyceraldehyde 3-phosphate + L-tryptophan + H2O. Its pathway is amino-acid biosynthesis; L-tryptophan biosynthesis; L-tryptophan from chorismate: step 5/5. Functionally, the alpha subunit is responsible for the aldol cleavage of indoleglycerol phosphate to indole and glyceraldehyde 3-phosphate. The chain is Tryptophan synthase alpha chain from Rhodopseudomonas palustris (strain ATCC BAA-98 / CGA009).